The chain runs to 196 residues: Nucleoside triphosphate pyrophosphatase (196 aa).

The active-site Proton acceptor is the Asp70.

It belongs to the Maf family. Requires a divalent metal cation as cofactor.

It localises to the cytoplasm. The catalysed reaction is a ribonucleoside 5'-triphosphate + H2O = a ribonucleoside 5'-phosphate + diphosphate + H(+). It carries out the reaction a 2'-deoxyribonucleoside 5'-triphosphate + H2O = a 2'-deoxyribonucleoside 5'-phosphate + diphosphate + H(+). In terms of biological role, nucleoside triphosphate pyrophosphatase. May have a dual role in cell division arrest and in preventing the incorporation of modified nucleotides into cellular nucleic acids. The polypeptide is Nucleoside triphosphate pyrophosphatase (Gloeothece citriformis (strain PCC 7424) (Cyanothece sp. (strain PCC 7424))).